The primary structure comprises 6733 residues: Replicase polyprotein 1ab (6733 aa).

Positions Phe-1633–Glu-1814 constitute a Macro domain. Positions Leu-2183 to Leu-2565 are HD1. 10 helical membrane passes run Ile-2191–Leu-2211, Val-2219–Val-2239, Gly-2266–Val-2286, Ala-2411–Phe-2431, Val-2521–Leu-2541, Phe-2546–Phe-2566, Val-2769–Gly-2789, Ile-2937–Leu-2957, Val-2986–Trp-3006, and Leu-3022–Phe-3042. Residues Val-2769–Phe-3042 form an HD2 region. Catalysis depends on charge relay system; for 3C-like serine proteinase activity residues His-3184, Glu-3222, and Ser-3291. 7 helical membrane-spanning segments follow: residues Ser-3422 to Cys-3442, Val-3456 to Trp-3478, Leu-3486 to Phe-3506, Val-3514 to Asn-3534, Ala-3538 to Val-3558, Ala-3573 to Phe-3593, and Leu-3598 to Phe-3613. The interval Asn-3430–Phe-3613 is HD3. The NiRAN domain maps to Asp-4442–Phe-4673. Residues Phe-4981 to Phe-5132 enclose the RdRp catalytic domain. The CV ZBD domain occupies Phe-5289–Val-5404. 12 residues coordinate Zn(2+): Cys-5293, Cys-5296, Cys-5304, Cys-5307, Cys-5314, Cys-5317, His-5321, His-5327, Cys-5336, Cys-5338, Cys-5359, and Cys-5362. Residues Asn-5509–Leu-5688 enclose the (+)RNA virus helicase ATP-binding domain. One can recognise a (+)RNA virus helicase C-terminal domain in the interval Thr-5689 to Asn-5848. The region spanning Asp-5846–Lys-6059 is the ExoN domain. Catalysis depends on residues Asp-5860, Glu-5862, and Asp-5961. The Zn(2+) site is built by His-6025, Cys-6029, and His-6033. Active-site residues include His-6037 and Asp-6042. Residue Cys-6048 participates in Zn(2+) binding. In terms of domain architecture, NendoU spans Leu-6327–Pro-6467. Active-site residues include His-6363, His-6380, Lys-6412, Lys-6509, Asp-6585, Lys-6613, and Glu-6647. In terms of domain architecture, Nidovirus-type SAM-dependent 2'-O-MTase spans Lys-6469–His-6733.

In terms of processing, specific enzymatic cleavages in vivo by its own protease yield mature proteins. 3CL-PRO is autocatalytically processed.

Its subcellular location is the host membrane. It carries out the reaction RNA(n) + a ribonucleoside 5'-triphosphate = RNA(n+1) + diphosphate. It catalyses the reaction ATP + H2O = ADP + phosphate + H(+). Its function is as follows. The 3C-like serine proteinase is responsible for the majority of cleavages. In terms of biological role, the helicase which contains a zinc finger structure displays RNA and DNA duplex-unwinding activities with 5' to 3' polarity. Acts on both ssRNA and dsRNA in a 3' to 5' direction. Functionally, nendoU is a Mn(2+)-dependent, uridylate-specific enzyme, which leaves 2'-3'-cyclic phosphates 5' to the cleaved bond. This chain is Replicase polyprotein 1ab (rep), found in Bos taurus (Bovine).